The sequence spans 399 residues: UDP-N-acetylglucosamine--N-acetylmuramyl-(pentapeptide) pyrophosphoryl-undecaprenol N-acetylglucosamine transferase (399 aa).

UDP-N-acetyl-alpha-D-glucosamine is bound by residues 29 to 31 (TAG), asparagine 148, arginine 185, serine 219, and glutamine 318.

The protein belongs to the glycosyltransferase 28 family. MurG subfamily.

It localises to the cell membrane. The catalysed reaction is di-trans,octa-cis-undecaprenyl diphospho-N-acetyl-alpha-D-muramoyl-L-alanyl-D-glutamyl-meso-2,6-diaminopimeloyl-D-alanyl-D-alanine + UDP-N-acetyl-alpha-D-glucosamine = di-trans,octa-cis-undecaprenyl diphospho-[N-acetyl-alpha-D-glucosaminyl-(1-&gt;4)]-N-acetyl-alpha-D-muramoyl-L-alanyl-D-glutamyl-meso-2,6-diaminopimeloyl-D-alanyl-D-alanine + UDP + H(+). The protein operates within cell wall biogenesis; peptidoglycan biosynthesis. In terms of biological role, cell wall formation. Catalyzes the transfer of a GlcNAc subunit on undecaprenyl-pyrophosphoryl-MurNAc-pentapeptide (lipid intermediate I) to form undecaprenyl-pyrophosphoryl-MurNAc-(pentapeptide)GlcNAc (lipid intermediate II). This is UDP-N-acetylglucosamine--N-acetylmuramyl-(pentapeptide) pyrophosphoryl-undecaprenol N-acetylglucosamine transferase from Mycobacterium ulcerans (strain Agy99).